The sequence spans 560 residues: Clathrin interactor EPSIN 1 (560 aa).

An ENTH domain is found at 20 to 152 (LKVLKVPEME…NNKEKISEIR (133 aa)). The disordered stretch occupies residues 190 to 288 (NFDSYKDRDS…KPSTGSANQV (99 aa)). A compositionally biased stretch (basic and acidic residues) spans 193 to 220 (SYKDRDSREDKNDYESFQKSRRGVKTEE). Residues 221-233 (QSYTSKKSFSRYG) show a composition bias toward polar residues. Residues 234–251 (STDHDNLSSGKKSPDSAK) are compositionally biased toward basic and acidic residues. Residues 274-287 (GTSSNKPSTGSANQ) are compositionally biased toward polar residues. A Clathrin binding motif is present at residues 296-300 (IGDFL). The ALPHA-ADR binding signature appears at 320–322 (DLF). The span at 414-439 (SHSASVSTGPQAPSVHGSATNTTSPL) shows a compositional bias: polar residues. 2 disordered regions span residues 414-453 (SHSA…QKKD) and 517-560 (LGKT…GFKQ). Over residues 526-536 (QQQQQQQQQQQ) the composition is skewed to low complexity. Residues 544-554 (FFSSLSNQRYQ) show a composition bias toward polar residues.

This sequence belongs to the epsin family. Interacts with clathrin, VTI11, GAMMA-ADR and VSR1. Binds to the deubiquitinating enzyme AMSH3. In terms of tissue distribution, mostly expressed in cotyledons and flowers, and, to a lower extent, in roots, leaves and siliques (at protein level).

The protein resides in the golgi apparatus. The protein localises to the prevacuolar compartment. Its subcellular location is the cytoplasm. It is found in the cytoplasmic vesicle. It localises to the clathrin-coated vesicle. The protein resides in the cytoskeleton. In terms of biological role, may have a role in transport via clathrin-coated vesicles from the trans-Golgi network to endosomes. Stimulates clathrin assembly. Does not seem to bind to phospholipids. Plays an important role in the vacuolar trafficking of soluble cargo proteins at the trans-Golgi network. The chain is Clathrin interactor EPSIN 1 (EPSIN1) from Arabidopsis thaliana (Mouse-ear cress).